Here is a 99-residue protein sequence, read N- to C-terminus: Class II hydrophobin B (99 aa).

The N-terminal stretch at 1 to 15 (MKFFAIAALFAGALA) is a signal peptide. 2 disulfide bridges follow: cysteine 30–cysteine 79 and cysteine 40–cysteine 70.

It belongs to the cerato-ulmin hydrophobin family.

It is found in the secreted. Its subcellular location is the cell wall. The protein resides in the vacuole. It localises to the cytoplasmic vesicle. Its function is as follows. Aerial growth, conidiation, and dispersal of filamentous fungi in the environment rely upon a capability of their secreting small amphipathic proteins called hydrophobins (HPBs) with low sequence identity. Class I can self-assemble into an outermost layer of rodlet bundles on aerial cell surfaces, conferring cellular hydrophobicity that supports fungal growth, development and dispersal; whereas Class II form highly ordered films at water-air interfaces through intermolecular interactions but contribute nothing to the rodlet structure. Hyd2B contributes to certain cell wall-related features, such as hydrophobicity but is not involved in cell wall-related events during fungal proliferation in host hemocoel. Does not contribute to conidial hydrophobicity. Involved in insect hemocoel colonization independent of cell hydrophobicity. This Beauveria bassiana (strain ARSEF 2860) (White muscardine disease fungus) protein is Class II hydrophobin B.